A 353-amino-acid polypeptide reads, in one-letter code: Photosystem II D2 protein (353 aa).

N-acetylthreonine is present on threonine 2. Residue threonine 2 is modified to Phosphothreonine. A helical membrane pass occupies residues 41–61 (CAYFALGGWFTGTTFVTSWYT). Histidine 118 contacts chlorophyll a. Residues 125-141 (GFMLRQFELARSVQLRP) form a helical membrane-spanning segment. 2 residues coordinate pheophytin a: glutamine 130 and asparagine 143. Residues 153 to 166 (VFVSVFLIYPLGQS) traverse the membrane as a helical segment. Histidine 198 provides a ligand contact to chlorophyll a. Residues 208–228 (AALLCAIHGATVENTLFEDGD) form a helical membrane-spanning segment. A plastoquinone-binding residues include histidine 215 and phenylalanine 262. Histidine 215 is a binding site for Fe cation. Position 269 (histidine 269) interacts with Fe cation. The chain crosses the membrane as a helical span at residues 279–295 (GLWMSALGVVGLALNLR).

Belongs to the reaction center PufL/M/PsbA/D family. In terms of assembly, PSII is composed of 1 copy each of membrane proteins PsbA, PsbB, PsbC, PsbD, PsbE, PsbF, PsbH, PsbI, PsbJ, PsbK, PsbL, PsbM, PsbT, PsbX, PsbY, PsbZ, Psb30/Ycf12, at least 3 peripheral proteins of the oxygen-evolving complex and a large number of cofactors. It forms dimeric complexes. The D1/D2 heterodimer binds P680, chlorophylls that are the primary electron donor of PSII, and subsequent electron acceptors. It shares a non-heme iron and each subunit binds pheophytin, quinone, additional chlorophylls, carotenoids and lipids. There is also a Cl(-1) ion associated with D1 and D2, which is required for oxygen evolution. The PSII complex binds additional chlorophylls, carotenoids and specific lipids. is required as a cofactor.

The protein resides in the plastid. Its subcellular location is the chloroplast thylakoid membrane. The catalysed reaction is 2 a plastoquinone + 4 hnu + 2 H2O = 2 a plastoquinol + O2. Functionally, photosystem II (PSII) is a light-driven water:plastoquinone oxidoreductase that uses light energy to abstract electrons from H(2)O, generating O(2) and a proton gradient subsequently used for ATP formation. It consists of a core antenna complex that captures photons, and an electron transfer chain that converts photonic excitation into a charge separation. The D1/D2 (PsbA/PsbD) reaction center heterodimer binds P680, the primary electron donor of PSII as well as several subsequent electron acceptors. D2 is needed for assembly of a stable PSII complex. This Glycine max (Soybean) protein is Photosystem II D2 protein.